The sequence spans 484 residues: Secreted RxLR effector protein 104 (484 aa).

Positions 1 to 24 are cleaved as a signal peptide; sequence MRSAYPVLTALLVVASSQIAAGSG. The short motif at 48 to 65 is the RxLR-dEER element; it reads RFLRGSRDVHNNVANEER. N175 is a glycosylation site (N-linked (GlcNAc...) asparagine). The interval 324–463 is disordered; the sequence is ENPKGQSPYP…SSSVLTPEDV (140 aa). Residues 327-346 show a composition bias toward polar residues; that stretch reads KGQSPYPSTPLTAASTSKGG. Positions 402–413 are enriched in low complexity; the sequence is SSSSGPSRAFAP. Residues 418 to 428 show a composition bias toward polar residues; the sequence is DQTFITENSRL.

It belongs to the RxLR effector family.

It localises to the secreted. It is found in the host nucleus. Secreted effector that completely suppresses the host cell death induced by cell death-inducing proteins. In Plasmopara viticola (Downy mildew of grapevine), this protein is Secreted RxLR effector protein 104.